We begin with the raw amino-acid sequence, 467 residues long: Acid phosphatase PHO12 (467 aa).

Positions 1–17 (MLKSAVYSILAASLVNA) are cleaved as a signal peptide. His-75 acts as the Nucleophile in catalysis. 5 N-linked (GlcNAc...) asparagine glycosylation sites follow: Asn-97, Asn-162, Asn-192, Asn-250, and Asn-315. Catalysis depends on Asp-338, which acts as the Proton donor. N-linked (GlcNAc...) asparagine glycosylation is found at Asn-356, Asn-390, Asn-439, Asn-445, and Asn-461.

It belongs to the histidine acid phosphatase family. Glycosylated during secretion across the membrane.

It catalyses the reaction a phosphate monoester + H2O = an alcohol + phosphate. The chain is Acid phosphatase PHO12 (PHO12) from Saccharomyces cerevisiae (strain ATCC 204508 / S288c) (Baker's yeast).